A 92-amino-acid polypeptide reads, in one-letter code: Small ribosomal subunit protein uS19 (92 aa).

Its function is as follows. Protein S19 forms a complex with S13 that binds strongly to the 16S ribosomal RNA. The protein is Small ribosomal subunit protein uS19 of Rhodopseudomonas palustris (strain ATCC BAA-98 / CGA009).